Consider the following 834-residue polypeptide: Glycerol-3-phosphate acyltransferase (834 aa).

Positions 309–314 (CHRSHI) match the HXXXXD motif motif.

Belongs to the GPAT/DAPAT family.

The protein localises to the cell inner membrane. It carries out the reaction sn-glycerol 3-phosphate + an acyl-CoA = a 1-acyl-sn-glycero-3-phosphate + CoA. The protein operates within phospholipid metabolism; CDP-diacylglycerol biosynthesis; CDP-diacylglycerol from sn-glycerol 3-phosphate: step 1/3. This Pseudomonas fluorescens (strain Pf0-1) protein is Glycerol-3-phosphate acyltransferase.